We begin with the raw amino-acid sequence, 318 residues long: Formimidoylglutamase (318 aa).

Mn(2+) is bound by residues histidine 130, aspartate 155, histidine 157, aspartate 159, aspartate 246, and aspartate 248.

The protein belongs to the arginase family. It depends on Mn(2+) as a cofactor.

It catalyses the reaction N-formimidoyl-L-glutamate + H2O = formamide + L-glutamate. Its pathway is amino-acid degradation; L-histidine degradation into L-glutamate; L-glutamate from N-formimidoyl-L-glutamate (hydrolase route): step 1/1. Its function is as follows. Catalyzes the conversion of N-formimidoyl-L-glutamate to L-glutamate and formamide. This chain is Formimidoylglutamase, found in Photorhabdus laumondii subsp. laumondii (strain DSM 15139 / CIP 105565 / TT01) (Photorhabdus luminescens subsp. laumondii).